The following is a 591-amino-acid chain: Probable translation initiation factor IF-2 (591 aa).

One can recognise a tr-type G domain in the interval Leu7 to Glu223. The interval Gly16–Thr23 is G1. Gly16–Thr23 contributes to the GTP binding site. The segment at Ala41–His45 is G2. Residues Asp78–Gly81 form a G3 region. GTP-binding positions include Asp78 to His82 and Asn132 to Asp135. The interval Asn132–Asp135 is G4. The segment at Ser200–Phe202 is G5.

The protein belongs to the TRAFAC class translation factor GTPase superfamily. Classic translation factor GTPase family. IF-2 subfamily.

Function in general translation initiation by promoting the binding of the formylmethionine-tRNA to ribosomes. Seems to function along with eIF-2. The chain is Probable translation initiation factor IF-2 from Methanosarcina mazei (strain ATCC BAA-159 / DSM 3647 / Goe1 / Go1 / JCM 11833 / OCM 88) (Methanosarcina frisia).